A 253-amino-acid polypeptide reads, in one-letter code: MELEQREGTMAAVGFEEFSAPPGSELALPPLFGGHILESELETEVEFVSGGLGGSGLRERDEEEEAARGRRRRQRELNRRKYQALGRRCREIEQVNERVLNRLHQVQRITRRLQQERRFLMRVLDSYGDDYRASQFTIVLEDEGSQGTDAPTPGNAENEPPEKETLSPPRRTPAPPEPGSPAPGEGPSGRKRRRVPRDGRRAGNALTPELAPVQIKVEEDFGFEADEALDSSWVSRGPDKLLPYPTLASPASD.

Disordered stretches follow at residues 49 to 72 (SGGL…GRRR) and 142 to 211 (DEGS…PELA). Position 167 is a phosphoserine (S167). Positions 170-181 (RRTPAPPEPGSP) are enriched in pro residues. T172 carries the post-translational modification Phosphothreonine. Phosphoserine occurs at positions 180 and 188. Phosphothreonine is present on T207. K216 participates in a covalent cross-link: Glycyl lysine isopeptide (Lys-Gly) (interchain with G-Cter in SUMO2). A disordered region spans residues 234 to 253 (VSRGPDKLLPYPTLASPASD). S249 and S252 each carry phosphoserine.

As to quaternary structure, interacts with NOL3; translocates NOL3 into the nucleus and negatively regulated TFPT-induced cell death. Component of the chromatin remodeling INO80 complex; specifically part of a complex module associated with the N-terminus of INO80.

It is found in the nucleus. Functionally, appears to promote apoptosis in a p53/TP53-independent manner. Putative regulatory component of the chromatin remodeling INO80 complex which is involved in transcriptional regulation, DNA replication and probably DNA repair. The protein is TCF3 fusion partner (TFPT) of Homo sapiens (Human).